Reading from the N-terminus, the 351-residue chain is Pinopsin (351 aa).

At 1–30 (MSSNSSQAPPNGTPGPFDGPQWPYQAPQST) the chain is on the extracellular side. Asn-4 is a glycosylation site (N-linked (GlcNAc...) asparagine). A helical transmembrane segment spans residues 31–55 (YVGVAVLMGTVVACASVVNGLVIVV). The Cytoplasmic segment spans residues 56-67 (SICYKKLRSPLN). Residues 68–92 (YILVNLAVADLLVTLCGSSVSLSNN) form a helical membrane-spanning segment. At 93-107 (INGFFVFGRRMCELE) the chain is on the extracellular side. Cys-104 and Cys-181 are oxidised to a cystine. A helical membrane pass occupies residues 108–127 (GFMVSLTGIVGLWSLAILAL). Residues 128–146 (ERYVVVCKPLGDFQFQRRH) lie on the Cytoplasmic side of the membrane. The helical transmembrane segment at 147-170 (AVSGCAFTWGWALLWSAPPLLGWS) threads the bilayer. The Extracellular segment spans residues 171 to 194 (SYVPEGLRTSCGPNWYTGGSNNNS). The N-linked (GlcNAc...) asparagine glycan is linked to Asn-192. The helical transmembrane segment at 195-222 (YILSLFVTCFVLPLSLILFSYTNLLLTL) threads the bilayer. The Cytoplasmic portion of the chain corresponds to 223–244 (RAAAAQQKEADTTQRAEREVTR). A helical transmembrane segment spans residues 245–268 (MVIVMVMAFLLCWLPYSTFALVVA). At 269–276 (THKGIIIQ) the chain is on the extracellular side. Residues 277–301 (PVLASLPSYFSKTATVYNPIIYVFM) form a helical membrane-spanning segment. Position 288 is an N6-(retinylidene)lysine (Lys-288). Residues 302–351 (NKQFQSCLLEMLCCGYQPQRTGKASPGTPGPHADVTAAGLRNKVMPAHPV) are Cytoplasmic-facing. Residues Cys-314 and Cys-315 are each lipidated (S-palmitoyl cysteine).

Belongs to the G-protein coupled receptor 1 family. Opsin subfamily. In terms of processing, phosphorylated on some or all of the serine and threonine residues present in the C-terminal region. In terms of tissue distribution, pineal gland.

The protein resides in the membrane. In terms of biological role, produces a slow and prolonged phototransduction response consistent with the non-visual function of pineal photoreception. This Gallus gallus (Chicken) protein is Pinopsin.